Reading from the N-terminus, the 490-residue chain is Cytochrome P450 2C20 (490 aa).

A heme-binding site is contributed by Cys435.

It belongs to the cytochrome P450 family. Heme is required as a cofactor.

It localises to the endoplasmic reticulum membrane. It is found in the microsome membrane. The catalysed reaction is an organic molecule + reduced [NADPH--hemoprotein reductase] + O2 = an alcohol + oxidized [NADPH--hemoprotein reductase] + H2O + H(+). Its function is as follows. Cytochromes P450 are a group of heme-thiolate monooxygenases. In liver microsomes, this enzyme is involved in an NADPH-dependent electron transport pathway. It oxidizes a variety of structurally unrelated compounds, including steroids, fatty acids, and xenobiotics. The sequence is that of Cytochrome P450 2C20 (CYP2C20) from Macaca fascicularis (Crab-eating macaque).